A 122-amino-acid polypeptide reads, in one-letter code: Large ribosomal subunit protein uL22 (122 aa).

Positions 102–122 (VAEGKEMKSSKSHKKNQAEGK) are disordered.

This sequence belongs to the universal ribosomal protein uL22 family. Part of the 50S ribosomal subunit.

In terms of biological role, this protein binds specifically to 23S rRNA; its binding is stimulated by other ribosomal proteins, e.g. L4, L17, and L20. It is important during the early stages of 50S assembly. It makes multiple contacts with different domains of the 23S rRNA in the assembled 50S subunit and ribosome. The globular domain of the protein is located near the polypeptide exit tunnel on the outside of the subunit, while an extended beta-hairpin is found that lines the wall of the exit tunnel in the center of the 70S ribosome. This Helicobacter pylori (strain G27) protein is Large ribosomal subunit protein uL22.